Consider the following 213-residue polypeptide: NADH-quinone oxidoreductase subunit C (213 aa).

It belongs to the complex I 30 kDa subunit family. NDH-1 is composed of 15 different subunits. Subunits NuoB, C, D, E, F, and G constitute the peripheral sector of the complex.

It localises to the cell membrane. It carries out the reaction a quinone + NADH + 5 H(+)(in) = a quinol + NAD(+) + 4 H(+)(out). In terms of biological role, NDH-1 shuttles electrons from NADH, via FMN and iron-sulfur (Fe-S) centers, to quinones in the respiratory chain. The immediate electron acceptor for the enzyme in this species is believed to be a menaquinone. Couples the redox reaction to proton translocation (for every two electrons transferred, four hydrogen ions are translocated across the cytoplasmic membrane), and thus conserves the redox energy in a proton gradient. The chain is NADH-quinone oxidoreductase subunit C from Deinococcus geothermalis (strain DSM 11300 / CIP 105573 / AG-3a).